A 292-amino-acid chain; its full sequence is 4-hydroxy-tetrahydrodipicolinate synthase (292 aa).

Thr45 serves as a coordination point for pyruvate. Tyr133 (proton donor/acceptor) is an active-site residue. Catalysis depends on Lys161, which acts as the Schiff-base intermediate with substrate. Residue Ile203 participates in pyruvate binding.

This sequence belongs to the DapA family. In terms of assembly, homotetramer; dimer of dimers.

It localises to the cytoplasm. It carries out the reaction L-aspartate 4-semialdehyde + pyruvate = (2S,4S)-4-hydroxy-2,3,4,5-tetrahydrodipicolinate + H2O + H(+). It functions in the pathway amino-acid biosynthesis; L-lysine biosynthesis via DAP pathway; (S)-tetrahydrodipicolinate from L-aspartate: step 3/4. Functionally, catalyzes the condensation of (S)-aspartate-beta-semialdehyde [(S)-ASA] and pyruvate to 4-hydroxy-tetrahydrodipicolinate (HTPA). This Vibrio vulnificus (strain CMCP6) protein is 4-hydroxy-tetrahydrodipicolinate synthase.